Here is a 336-residue protein sequence, read N- to C-terminus: 4-hydroxy-3-methylbut-2-enyl diphosphate reductase (336 aa).

Cysteine 37 lines the [4Fe-4S] cluster pocket. 2 residues coordinate (2E)-4-hydroxy-3-methylbut-2-enyl diphosphate: histidine 66 and histidine 99. Positions 66 and 99 each coordinate dimethylallyl diphosphate. Histidine 66 and histidine 99 together coordinate isopentenyl diphosphate. Residue cysteine 121 participates in [4Fe-4S] cluster binding. Residue histidine 149 coordinates (2E)-4-hydroxy-3-methylbut-2-enyl diphosphate. Histidine 149 serves as a coordination point for dimethylallyl diphosphate. Histidine 149 contacts isopentenyl diphosphate. Residue glutamate 151 is the Proton donor of the active site. A (2E)-4-hydroxy-3-methylbut-2-enyl diphosphate-binding site is contributed by threonine 189. Cysteine 219 serves as a coordination point for [4Fe-4S] cluster. Residues serine 247, serine 248, asparagine 249, and serine 292 each coordinate (2E)-4-hydroxy-3-methylbut-2-enyl diphosphate. The dimethylallyl diphosphate site is built by serine 247, serine 248, asparagine 249, and serine 292. The isopentenyl diphosphate site is built by serine 247, serine 248, asparagine 249, and serine 292.

It belongs to the IspH family. [4Fe-4S] cluster is required as a cofactor.

It catalyses the reaction isopentenyl diphosphate + 2 oxidized [2Fe-2S]-[ferredoxin] + H2O = (2E)-4-hydroxy-3-methylbut-2-enyl diphosphate + 2 reduced [2Fe-2S]-[ferredoxin] + 2 H(+). It carries out the reaction dimethylallyl diphosphate + 2 oxidized [2Fe-2S]-[ferredoxin] + H2O = (2E)-4-hydroxy-3-methylbut-2-enyl diphosphate + 2 reduced [2Fe-2S]-[ferredoxin] + 2 H(+). It participates in isoprenoid biosynthesis; dimethylallyl diphosphate biosynthesis; dimethylallyl diphosphate from (2E)-4-hydroxy-3-methylbutenyl diphosphate: step 1/1. The protein operates within isoprenoid biosynthesis; isopentenyl diphosphate biosynthesis via DXP pathway; isopentenyl diphosphate from 1-deoxy-D-xylulose 5-phosphate: step 6/6. Catalyzes the conversion of 1-hydroxy-2-methyl-2-(E)-butenyl 4-diphosphate (HMBPP) into a mixture of isopentenyl diphosphate (IPP) and dimethylallyl diphosphate (DMAPP). Acts in the terminal step of the DOXP/MEP pathway for isoprenoid precursor biosynthesis. This is 4-hydroxy-3-methylbut-2-enyl diphosphate reductase from Nocardia farcinica (strain IFM 10152).